Here is a 337-residue protein sequence, read N- to C-terminus: DNA-directed RNA polymerase subunit alpha (337 aa).

The alpha N-terminal domain (alpha-NTD) stretch occupies residues 1–233 (MIQKNWQELI…DQLSLFVNFE (233 aa)). The segment at 249–337 (FNPALLKKVD…DLAKRYEDQY (89 aa)) is alpha C-terminal domain (alpha-CTD).

It belongs to the RNA polymerase alpha chain family. As to quaternary structure, homodimer. The RNAP catalytic core consists of 2 alpha, 1 beta, 1 beta' and 1 omega subunit. When a sigma factor is associated with the core the holoenzyme is formed, which can initiate transcription.

It carries out the reaction RNA(n) + a ribonucleoside 5'-triphosphate = RNA(n+1) + diphosphate. Its function is as follows. DNA-dependent RNA polymerase catalyzes the transcription of DNA into RNA using the four ribonucleoside triphosphates as substrates. This chain is DNA-directed RNA polymerase subunit alpha, found in Bartonella quintana (strain Toulouse) (Rochalimaea quintana).